We begin with the raw amino-acid sequence, 131 residues long: Small ribosomal subunit protein uS8 (131 aa).

This sequence belongs to the universal ribosomal protein uS8 family. In terms of assembly, part of the 30S ribosomal subunit. Contacts proteins S5 and S12.

Functionally, one of the primary rRNA binding proteins, it binds directly to 16S rRNA central domain where it helps coordinate assembly of the platform of the 30S subunit. This is Small ribosomal subunit protein uS8 from Halorhodospira halophila (strain DSM 244 / SL1) (Ectothiorhodospira halophila (strain DSM 244 / SL1)).